The sequence spans 397 residues: G2/mitotic-specific cyclin-B1 (397 aa).

Belongs to the cyclin family. Cyclin AB subfamily. As to quaternary structure, interacts with the cdc2 protein kinase to form a serine/threonine kinase holoenzyme complex also known as maturation promoting factor (MPF). The cyclin subunit imparts substrate specificity to the complex. When not in a complex with cdc2, interacts with spdya. Interacts with nap1l1. Interacts with nanos1.

The protein resides in the cytoplasm. Its subcellular location is the cytoskeleton. It localises to the microtubule organizing center. The protein localises to the centrosome. It is found in the nucleus. Its function is as follows. Essential for the control of the cell cycle at the G2/M (mitosis) transition. The sequence is that of G2/mitotic-specific cyclin-B1 (ccnb1) from Xenopus laevis (African clawed frog).